Here is a 304-residue protein sequence, read N- to C-terminus: N-acetylmuramic acid 6-phosphate etherase (304 aa).

The region spanning 58–221 (IVDRMKQGGR…TTASMVKMGK (164 aa)) is the SIS domain. The active-site Proton donor is the E86. The active site involves E117.

This sequence belongs to the GCKR-like family. MurNAc-6-P etherase subfamily. Homodimer.

It carries out the reaction N-acetyl-D-muramate 6-phosphate + H2O = N-acetyl-D-glucosamine 6-phosphate + (R)-lactate. It participates in amino-sugar metabolism; N-acetylmuramate degradation. In terms of biological role, specifically catalyzes the cleavage of the D-lactyl ether substituent of MurNAc 6-phosphate, producing GlcNAc 6-phosphate and D-lactate. This Clostridioides difficile (strain 630) (Peptoclostridium difficile) protein is N-acetylmuramic acid 6-phosphate etherase.